The sequence spans 315 residues: Alpha- and gamma-adaptin-binding protein p34 (315 aa).

Residues 197–234 (IGSADPCHPEQPHLPAADSTESLSDHRGGASNTTDAQV) are disordered. Ser-310 and Ser-311 each carry phosphoserine.

In terms of assembly, associated with AP-1 and AP-2 complexes. Widely expressed, including in skin and keratinocytes, with highest levels in adrenal gland, rectum and thymus.

It is found in the cytoplasm. Its subcellular location is the cytosol. May be involved in endocytic recycling of growth factor receptors such as EGFR. This is Alpha- and gamma-adaptin-binding protein p34 (AAGAB) from Homo sapiens (Human).